The following is a 175-amino-acid chain: MLDREGYRPNVGIILVNARNEVFWGKRIREHSWQFPQGGIKHGESPEQAMYRELYEEVGLRPEHVKILGRTRGWLRYDVPKHWIRREWRNTYRGQKQIWYLLRLVGRDTDVCLRASTHPEFDAWRWSEYWVPLEAVIEFKRQVYQQALTELSRLLFRSKPAELPEGYRQGTASQA.

The Nudix hydrolase domain occupies 6-149 (GYRPNVGIIL…KRQVYQQALT (144 aa)). The Nudix box signature appears at 38–59 (GGIKHGESPEQAMYRELYEEVG).

This sequence belongs to the Nudix hydrolase family. RppH subfamily. A divalent metal cation serves as cofactor.

In terms of biological role, accelerates the degradation of transcripts by removing pyrophosphate from the 5'-end of triphosphorylated RNA, leading to a more labile monophosphorylated state that can stimulate subsequent ribonuclease cleavage. This chain is RNA pyrophosphohydrolase, found in Azoarcus sp. (strain BH72).